A 596-amino-acid polypeptide reads, in one-letter code: Ulvan-active sulfatase (596 aa).

An N-terminal signal peptide occupies residues 1-27; sequence MLFLRFKFFNNRLLFVSVLCFVICVSC. Positions 58, 59, 97, 306, and 307 each coordinate Ca(2+). The active-site Nucleophile is the C97. C97 bears the 3-oxoalanine (Cys) mark.

This sequence belongs to the sulfatase family. The cofactor is Ca(2+). In terms of processing, the conversion to 3-oxoalanine (also known as C-formylglycine, FGly), of a serine or cysteine residue in prokaryotes and of a cysteine residue in eukaryotes, is critical for catalytic activity.

It localises to the periplasm. Sulfatase involved in ulvan degradation. Ulvan is the main polysaccharide component of the Ulvales (green seaweed) cell wall. It is composed of disaccharide building blocks comprising 3-sulfated rhamnose (Rha3S) linked to D-glucuronic acid (GlcA), L-iduronic acid (IduA), or D-xylose (Xyl). The sulfatase desulfates Xyl2S-Rha3S, product of the degradation of ulvan by endo-acting alpha-1,4-L-rhamnosidase, to Xyl-Rha3S. The polypeptide is Ulvan-active sulfatase (Formosa agariphila (strain DSM 15362 / KCTC 12365 / LMG 23005 / KMM 3901 / M-2Alg 35-1)).